Reading from the N-terminus, the 308-residue chain is Type II restriction enzyme MamI (308 aa).

The enzyme catalyses Endonucleolytic cleavage of DNA to give specific double-stranded fragments with terminal 5'-phosphates.. In terms of biological role, a P subtype restriction enzyme that recognizes the double-stranded sequence 5'-GATNNNNATC-3' and cleaves after N-5. The polypeptide is Type II restriction enzyme MamI (Microbacterium ammoniaphilum).